The chain runs to 216 residues: Small ribosomal subunit protein uS3c (216 aa).

The region spanning 43–118 is the KH type-2 domain; that stretch reads IKNYLQKNMR…KLNIAITRIT (76 aa).

Belongs to the universal ribosomal protein uS3 family. As to quaternary structure, part of the 30S ribosomal subunit.

Its subcellular location is the plastid. The protein localises to the chloroplast. The polypeptide is Small ribosomal subunit protein uS3c (rps3) (Eucalyptus globulus subsp. globulus (Tasmanian blue gum)).